The following is a 298-amino-acid chain: Lactose transport system permease protein LacF (298 aa).

Transmembrane regions (helical) follow at residues 17 to 37, 77 to 97, 112 to 132, 151 to 171, 208 to 228, and 269 to 289; these read GWLF…YPIL, VIFF…LAAM, MIFL…KSMF, PIGW…AITW, AFLT…TSTI, and FSYA…LSFL. Residues 73-290 form the ABC transmembrane type-1 domain; the sequence is LQNTVIFFVV…LMVAVLSFLQ (218 aa).

It belongs to the binding-protein-dependent transport system permease family. MalFG subfamily.

Its subcellular location is the cell inner membrane. Its function is as follows. Part of the binding-protein-dependent transport system for lactose. Probably responsible for the translocation of the substrate across the membrane. The polypeptide is Lactose transport system permease protein LacF (lacF) (Rhizobium radiobacter (Agrobacterium tumefaciens)).